We begin with the raw amino-acid sequence, 165 residues long: Type 3 secretion system regulator YopR (165 aa).

The protein belongs to the YopR family.

The protein localises to the secreted. Its function is as follows. May be involved in the regulation of the assembly of the type III secretion system (T3SS), also called injectisome, which is used to inject bacterial effector proteins into eukaryotic host cells. May control the secretion and/or polymerization of YscF/SctF, the principal component of the needle filament, thereby impacting the assembly of the T3SS. Involved in pathogenesis. This is Type 3 secretion system regulator YopR from Yersinia pseudotuberculosis serotype I (strain IP32953).